The sequence spans 1057 residues: Carbamoyl phosphate synthase large chain (1057 aa).

The segment at Met1–Glu401 is carboxyphosphate synthetic domain. The ATP site is built by Arg129, Arg169, Gly175, Gly176, Lys208, Ile210, Glu215, Gly241, Ile242, His243, Gln284, and Glu298. The region spanning Arg133–Val327 is the ATP-grasp 1 domain. 3 residues coordinate Mg(2+): Gln284, Glu298, and Asn300. Positions 284, 298, and 300 each coordinate Mn(2+). An oligomerization domain region spans residues Tyr402–Ser546. Positions Val547–Gly929 are carbamoyl phosphate synthetic domain. Positions Glu671–Leu861 constitute an ATP-grasp 2 domain. ATP is bound by residues Arg707, Arg746, Leu748, Glu752, Gly777, Val778, His779, Ser780, Gln820, and Glu832. Residues Gln820, Glu832, and Asn834 each contribute to the Mg(2+) site. 3 residues coordinate Mn(2+): Gln820, Glu832, and Asn834. The region spanning Val930–Met1057 is the MGS-like domain. Positions Val930 to Met1057 are allosteric domain.

This sequence belongs to the CarB family. As to quaternary structure, composed of two chains; the small (or glutamine) chain promotes the hydrolysis of glutamine to ammonia, which is used by the large (or ammonia) chain to synthesize carbamoyl phosphate. Tetramer of heterodimers (alpha,beta)4. The cofactor is Mg(2+). Mn(2+) serves as cofactor.

The enzyme catalyses hydrogencarbonate + L-glutamine + 2 ATP + H2O = carbamoyl phosphate + L-glutamate + 2 ADP + phosphate + 2 H(+). It carries out the reaction hydrogencarbonate + NH4(+) + 2 ATP = carbamoyl phosphate + 2 ADP + phosphate + 2 H(+). Its pathway is amino-acid biosynthesis; L-arginine biosynthesis; carbamoyl phosphate from bicarbonate: step 1/1. It participates in pyrimidine metabolism; UMP biosynthesis via de novo pathway; (S)-dihydroorotate from bicarbonate: step 1/3. In terms of biological role, large subunit of the glutamine-dependent carbamoyl phosphate synthetase (CPSase). CPSase catalyzes the formation of carbamoyl phosphate from the ammonia moiety of glutamine, carbonate, and phosphate donated by ATP, constituting the first step of 2 biosynthetic pathways, one leading to arginine and/or urea and the other to pyrimidine nucleotides. The large subunit (synthetase) binds the substrates ammonia (free or transferred from glutamine from the small subunit), hydrogencarbonate and ATP and carries out an ATP-coupled ligase reaction, activating hydrogencarbonate by forming carboxy phosphate which reacts with ammonia to form carbamoyl phosphate. The protein is Carbamoyl phosphate synthase large chain of Staphylococcus carnosus (strain TM300).